A 57-amino-acid polypeptide reads, in one-letter code: Sperm histone (57 aa).

Positions 1 to 57 (MARYRRTRTRSRSRRRRRSRRRRSSRRRRYGRSRRSYRSVGRRRRRYGRRRRRRRRY) are disordered. Phosphothreonine is present on Thr-9.

This sequence belongs to the protamine P1 family. In terms of tissue distribution, testis.

The protein localises to the nucleus. The protein resides in the chromosome. Its function is as follows. Protamines substitute for histones in the chromatin of sperm during the haploid phase of spermatogenesis. They compact sperm DNA into a highly condensed, stable and inactive complex. In Coturnix japonica (Japanese quail), this protein is Sperm histone.